The chain runs to 314 residues: Ribosomal RNA small subunit methyltransferase H (314 aa).

Residues 37 to 39 (GGH), Asp57, Phe83, Asp105, and Gln112 each bind S-adenosyl-L-methionine.

It belongs to the methyltransferase superfamily. RsmH family.

The protein resides in the cytoplasm. The catalysed reaction is cytidine(1402) in 16S rRNA + S-adenosyl-L-methionine = N(4)-methylcytidine(1402) in 16S rRNA + S-adenosyl-L-homocysteine + H(+). Specifically methylates the N4 position of cytidine in position 1402 (C1402) of 16S rRNA. The polypeptide is Ribosomal RNA small subunit methyltransferase H (Thioalkalivibrio sulfidiphilus (strain HL-EbGR7)).